Consider the following 358-residue polypeptide: Cytoplasmic dynein 2 light intermediate chain 1 (358 aa).

Disordered stretches follow at residues 1–35 (MPKV…EDAH) and 307–358 (ESTR…ALDP). Residues 24 to 33 (TDEEEAEEED) are compositionally biased toward acidic residues. 2 stretches are compositionally biased toward basic and acidic residues: residues 307–320 (ESTR…DPVK) and 333–349 (RAQK…EQAK).

Belongs to the dynein light intermediate chain family. Light intermediate chain of the cytoplasmic dynein complex 2, a multisubunit complex composed at least of eleven different proteins. The cytoplasmic dynein 2 complex consists of two catalytic heavy chains (HCs) and a number of non-catalytic subunits presented by intermediate chains (ICs), light intermediate chains (LICs) and light chains (LCs). Among them, a heavy chain (DYNC2H1), two intermediate chains (DYNC2I2 and DYNC2I1), a light intermediate chain (DYNC2LI1), and a light chain (DYNLT2B) are unique to the dynein-2 complex, but a subset of light chains are also shared by dynein-1 and dynein-2 complexes. Dynein-2 complex is built around two copies of cytoplasmic dynein 2 heavy chain 1 (DYNC2H1). The C-terminal region forms the motor domain, which converts the energy from ATP hydrolysis into movement. Its N-terminal region forms the tail, an extended structure that binds the other subunits and holds the two heavy chains in a homodimer.

It is found in the cytoplasm. Its subcellular location is the cell projection. The protein resides in the cilium. It localises to the cytoskeleton. The protein localises to the cilium basal body. It is found in the cilium axoneme. Its subcellular location is the microtubule organizing center. The protein resides in the centrosome. In terms of biological role, acts as one of several non-catalytic accessory components of the cytoplasmic dynein 2 complex (dynein-2 complex), a motor protein complex that drives the movement of cargos along microtubules within cilia and flagella in concert with the intraflagellar transport (IFT) system, facilitating the assembly of these organelles. This Danio rerio (Zebrafish) protein is Cytoplasmic dynein 2 light intermediate chain 1 (dync2li1).